Consider the following 351-residue polypeptide: Small ribosomal subunit biogenesis GTPase RsgA 1 (351 aa).

The CP-type G domain maps to 100–258 (LRTDAQIVAS…IIDTPGMREL (159 aa)). GTP contacts are provided by residues 148-151 (SKVD) and 200-208 (GSSGAGKST). Positions 282, 287, 289, and 295 each coordinate Zn(2+).

It belongs to the TRAFAC class YlqF/YawG GTPase family. RsgA subfamily. Monomer. Associates with 30S ribosomal subunit, binds 16S rRNA. It depends on Zn(2+) as a cofactor.

It is found in the cytoplasm. Functionally, one of several proteins that assist in the late maturation steps of the functional core of the 30S ribosomal subunit. Helps release RbfA from mature subunits. May play a role in the assembly of ribosomal proteins into the subunit. Circularly permuted GTPase that catalyzes slow GTP hydrolysis, GTPase activity is stimulated by the 30S ribosomal subunit. In Oceanobacillus iheyensis (strain DSM 14371 / CIP 107618 / JCM 11309 / KCTC 3954 / HTE831), this protein is Small ribosomal subunit biogenesis GTPase RsgA 1.